The chain runs to 259 residues: Phosphatidylserine decarboxylase proenzyme (259 aa).

Residues aspartate 86, histidine 142, and serine 226 each act as charge relay system; for autoendoproteolytic cleavage activity in the active site. Serine 226 functions as the Schiff-base intermediate with substrate; via pyruvic acid; for decarboxylase activity in the catalytic mechanism. Serine 226 carries the post-translational modification Pyruvic acid (Ser); by autocatalysis.

The protein belongs to the phosphatidylserine decarboxylase family. PSD-B subfamily. Prokaryotic type I sub-subfamily. Heterodimer of a large membrane-associated beta subunit and a small pyruvoyl-containing alpha subunit. Requires pyruvate as cofactor. Post-translationally, is synthesized initially as an inactive proenzyme. Formation of the active enzyme involves a self-maturation process in which the active site pyruvoyl group is generated from an internal serine residue via an autocatalytic post-translational modification. Two non-identical subunits are generated from the proenzyme in this reaction, and the pyruvate is formed at the N-terminus of the alpha chain, which is derived from the carboxyl end of the proenzyme. The autoendoproteolytic cleavage occurs by a canonical serine protease mechanism, in which the side chain hydroxyl group of the serine supplies its oxygen atom to form the C-terminus of the beta chain, while the remainder of the serine residue undergoes an oxidative deamination to produce ammonia and the pyruvoyl prosthetic group on the alpha chain. During this reaction, the Ser that is part of the protease active site of the proenzyme becomes the pyruvoyl prosthetic group, which constitutes an essential element of the active site of the mature decarboxylase.

It is found in the cell membrane. The enzyme catalyses a 1,2-diacyl-sn-glycero-3-phospho-L-serine + H(+) = a 1,2-diacyl-sn-glycero-3-phosphoethanolamine + CO2. It functions in the pathway phospholipid metabolism; phosphatidylethanolamine biosynthesis; phosphatidylethanolamine from CDP-diacylglycerol: step 2/2. Catalyzes the formation of phosphatidylethanolamine (PtdEtn) from phosphatidylserine (PtdSer). The chain is Phosphatidylserine decarboxylase proenzyme from Halalkalibacterium halodurans (strain ATCC BAA-125 / DSM 18197 / FERM 7344 / JCM 9153 / C-125) (Bacillus halodurans).